We begin with the raw amino-acid sequence, 219 residues long: Leukocyte surface antigen CD53 (219 aa).

The Cytoplasmic portion of the chain corresponds to 1-11 (MGMSSLKLLKY). A helical transmembrane segment spans residues 12-32 (VLFIFNLLFWVCGCCILGFGI). The Extracellular segment spans residues 33–54 (YFLVQNTYGVLFRNLPFLTLGN). A helical membrane pass occupies residues 55–69 (ILVIVGSIIMVVAFL). At 70-80 (GCMGSIKENKC) the chain is on the cytoplasmic side. A helical membrane pass occupies residues 81–106 (LLMSFFVLLLIILLAEVTIAILLFVY). Residues 107–181 (EQKLNTLVAE…NKAKSWFHSN (75 aa)) lie on the Extracellular side of the membrane. Residues N119, N129, and N148 are each glycosylated (N-linked (GlcNAc...) asparagine). Residues 182 to 206 (FLYIGIITICVCVIQVLGMSFALTL) traverse the membrane as a helical segment. Over 207–219 (NCQIDKTSQALGL) the chain is Cytoplasmic.

The protein belongs to the tetraspanin (TM4SF) family. Interacts with SCIMP. Interacts with CD45/PTPRC. Interacts with IL7R. Interacts with RBL2 and PPP2CA.

Its subcellular location is the cell membrane. It is found in the cell junction. It localises to the membrane. Its function is as follows. Structural component of specialized membrane microdomains known as tetraspanin-enriched microdomains (TERMs), which act as platforms for receptor clustering and signaling. Participates thereby in diverse biological functions such as cell signal transduction, adhesion, migration and protein trafficking. Plays a role in the activation of monocytes and B-cells. Acts as an essential regulator of B-cell development by promoting interleukin-7 receptor/IL7R signaling. Also promotes, in B-cells, the BCR signaling by recruiting PKC to the plasma membrane in order to phosphorylate its substrates. Plays an essential role in lymphocyte homing to lymph nodes by stabilizing L-selectin/SELL cell surface expression. Also mediates metabolic and inflammatory functions in hepatocytes and adipose tissue by promoting TNF-alpha and LPS signaling independent of the immune compartment. Protects hematopoietic stem cell function in response to stress by facilitating DREAM complex activity through association with p130/RBL2 and its phosphatase PP2A. This chain is Leukocyte surface antigen CD53 (Cd53), found in Mus musculus (Mouse).